A 106-amino-acid polypeptide reads, in one-letter code: MLLTTTPVIEGKRITHYYGIVAGEAVLGANVLKDLFAGIRDFVGGRSGTYEKELQHAREIALEELQENAHRLGANAVIGIDIDYEVLGKENGMLMVSVSGTAVFVE.

It belongs to the UPF0145 family.

The polypeptide is UPF0145 protein NE1032 (Nitrosomonas europaea (strain ATCC 19718 / CIP 103999 / KCTC 2705 / NBRC 14298)).